Reading from the N-terminus, the 290-residue chain is Small ribosomal subunit protein uS2 (290 aa).

Positions 263–282 (ATAGATWEAEAGGDWAAESA) are enriched in low complexity. The disordered stretch occupies residues 263-290 (ATAGATWEAEAGGDWAAESAQPNPETKW).

This sequence belongs to the universal ribosomal protein uS2 family. Component of the small ribosomal subunit. Mature ribosomes consist of a small (40S) and a large (60S) subunit. The 40S subunit contains about 33 different proteins and 1 molecule of RNA (18S). The 60S subunit contains about 49 different proteins and 3 molecules of RNA (25S, 5.8S and 5S). Interacts with rps21.

It is found in the cytoplasm. Required for the assembly and/or stability of the 40S ribosomal subunit. Required for the processing of the 20S rRNA-precursor to mature 18S rRNA in a late step of the maturation of 40S ribosomal subunits. This chain is Small ribosomal subunit protein uS2 (rps0), found in Talaromyces stipitatus (strain ATCC 10500 / CBS 375.48 / QM 6759 / NRRL 1006) (Penicillium stipitatum).